The chain runs to 135 residues: Retinol-binding protein 5 (135 aa).

The protein belongs to the calycin superfamily. Fatty-acid binding protein (FABP) family. Kidney.

The protein resides in the cytoplasm. Intracellular transport of retinol. In Bos taurus (Bovine), this protein is Retinol-binding protein 5 (RBP5).